Here is a 458-residue protein sequence, read N- to C-terminus: Transmembrane protein 135 (458 aa).

The next 6 helical transmembrane spans lie at 68-88 (ILQS…FFCI), 96-116 (FYLW…AILV), 149-169 (TLRN…MFFF), 298-318 (FQLG…SCFL), 331-351 (IIAG…TISM), and 380-400 (IIYS…VQTL).

It belongs to the TMEM135 family.

Its subcellular location is the mitochondrion membrane. It localises to the peroxisome membrane. Functionally, involved in mitochondrial metabolism by regulating the balance between mitochondrial fusion and fission. May act as a regulator of mitochondrial fission that promotes DNM1L-dependent fission through activation of DNM1L. May be involved in peroxisome organization. The sequence is that of Transmembrane protein 135 from Bos taurus (Bovine).